The sequence spans 391 residues: Phosphoglycerate kinase (391 aa).

Substrate contacts are provided by residues 16–18 (DLN), R31, 54–57 (HLGR), R108, and R141. ATP-binding positions include K192, E314, and 340–343 (GGDT).

The protein belongs to the phosphoglycerate kinase family. In terms of assembly, monomer.

It is found in the cytoplasm. It catalyses the reaction (2R)-3-phosphoglycerate + ATP = (2R)-3-phospho-glyceroyl phosphate + ADP. It participates in carbohydrate degradation; glycolysis; pyruvate from D-glyceraldehyde 3-phosphate: step 2/5. The chain is Phosphoglycerate kinase from Coxiella burnetii (strain RSA 493 / Nine Mile phase I).